The primary structure comprises 302 residues: Sulfate adenylyltransferase subunit 2 (302 aa).

This sequence belongs to the PAPS reductase family. CysD subfamily. As to quaternary structure, heterodimer composed of CysD, the smaller subunit, and CysN.

The enzyme catalyses sulfate + ATP + H(+) = adenosine 5'-phosphosulfate + diphosphate. It functions in the pathway sulfur metabolism; hydrogen sulfide biosynthesis; sulfite from sulfate: step 1/3. Functionally, with CysN forms the ATP sulfurylase (ATPS) that catalyzes the adenylation of sulfate producing adenosine 5'-phosphosulfate (APS) and diphosphate, the first enzymatic step in sulfur assimilation pathway. APS synthesis involves the formation of a high-energy phosphoric-sulfuric acid anhydride bond driven by GTP hydrolysis by CysN coupled to ATP hydrolysis by CysD. This Enterobacter sp. (strain 638) protein is Sulfate adenylyltransferase subunit 2.